A 212-amino-acid chain; its full sequence is Ribosomal RNA small subunit methyltransferase G (212 aa).

S-adenosyl-L-methionine is bound by residues Gly-75, Leu-80, 126–127 (AQ), and Arg-141.

The protein belongs to the methyltransferase superfamily. RNA methyltransferase RsmG family.

The protein resides in the cytoplasm. Specifically methylates the N7 position of guanine in position 518 of 16S rRNA. In Beutenbergia cavernae (strain ATCC BAA-8 / DSM 12333 / CCUG 43141 / JCM 11478 / NBRC 16432 / NCIMB 13614 / HKI 0122), this protein is Ribosomal RNA small subunit methyltransferase G.